The sequence spans 466 residues: Delta-1 crystallin (466 aa).

Belongs to the lyase 1 family. Argininosuccinate lyase subfamily. As to quaternary structure, homotetramer. Eye lens.

Functionally, delta crystallin, the principal crystallin in embryonic lens, is found only in birds and reptiles. Despite possessing the necessary catalytic residues, this protein does not function as an enzymatically active argininosuccinate lyase. This is Delta-1 crystallin (ASL1) from Anas platyrhynchos (Mallard).